Reading from the N-terminus, the 346-residue chain is Enkurin domain-containing protein 1 (346 aa).

The tract at residues 1 to 35 (MCEGPSRISGPIPPDPTLCPDNYRRPTSAQGRLEG) is disordered. The residue at position 91 (Ser91) is a Phosphoserine. The interval 91–171 (SLKRKDPKDH…AHFLRAHSRC (81 aa)) is required for binding to microtubules. Residues 114–125 (RFREQERSREQG) are compositionally biased toward basic and acidic residues. Disordered stretches follow at residues 114–137 (RFRE…WRSP), 167–197 (AHSR…EPGL), and 260–280 (AEAR…TRMP). Ser136 bears the Phosphoserine mark. A compositionally biased stretch (pro residues) spans 174 to 190 (GLPPPHVSSPQPTPPGP). An Enkurin domain is found at 251 to 343 (ERRDLWRREA…IFSRPKVFVK (93 aa)).

As to quaternary structure, interacts with alpha-tubulin. Interacts (via central region) with CCP110 (via N-terminal region); competes with CEP97 for binding to CCP110.

The protein resides in the cytoplasm. It localises to the cytoskeleton. The protein localises to the microtubule organizing center. It is found in the centrosome. Its subcellular location is the centriole. The protein resides in the cilium basal body. It localises to the cell projection. The protein localises to the cilium. It is found in the spindle. Its subcellular location is the spindle pole. The protein resides in the cilium axoneme. In terms of biological role, microtubule-binding protein which regulates microtubule organization and stability. Promotes the stability of astral microtubules and facilitates the proper orientation of the mitotic spindle. This allows the oriented division of basal keratinocytes and contributes to epidermal stratification. Required for the assembly of both primary and motile cilia. Destabilizes the interaction between CCP110 and CEP97 by competing with CEP97 for binding to CCP110 which promotes the removal of CCP110 and CEP97 from the mother centriole and allows the initiation of ciliogenesis. The chain is Enkurin domain-containing protein 1 (ENKD1) from Homo sapiens (Human).